We begin with the raw amino-acid sequence, 668 residues long: UvrABC system protein B (668 aa).

Residues 27–413 enclose the Helicase ATP-binding domain; sequence AGVQAGHRFQ…STQVVEQIIR (387 aa). 40–47 is an ATP binding site; the sequence is GATGTGKT. The short motif at 93-116 is the Beta-hairpin element; it reads YYDYYQPEAYIPVTDTYIEKSASI. The Helicase C-terminal domain maps to 430–596; the sequence is QVDDLYGEIR…PIVKKTSNAI (167 aa). The 36-residue stretch at 628–663 folds into the UVR domain; it reads PPLIQDLEAKMKAAAQELAFEEAARYRDQIKRLRDR.

It belongs to the UvrB family. In terms of assembly, forms a heterotetramer with UvrA during the search for lesions. Interacts with UvrC in an incision complex.

It localises to the cytoplasm. The UvrABC repair system catalyzes the recognition and processing of DNA lesions. A damage recognition complex composed of 2 UvrA and 2 UvrB subunits scans DNA for abnormalities. Upon binding of the UvrA(2)B(2) complex to a putative damaged site, the DNA wraps around one UvrB monomer. DNA wrap is dependent on ATP binding by UvrB and probably causes local melting of the DNA helix, facilitating insertion of UvrB beta-hairpin between the DNA strands. Then UvrB probes one DNA strand for the presence of a lesion. If a lesion is found the UvrA subunits dissociate and the UvrB-DNA preincision complex is formed. This complex is subsequently bound by UvrC and the second UvrB is released. If no lesion is found, the DNA wraps around the other UvrB subunit that will check the other stand for damage. The polypeptide is UvrABC system protein B (Thermosynechococcus vestitus (strain NIES-2133 / IAM M-273 / BP-1)).